The sequence spans 218 residues: Riboflavin kinase (218 aa).

Residues 1–19 form the signal peptide; it reads MFTWTIYVSLLLVLAGTFL. Threonine 72 and asparagine 74 together coordinate Mg(2+). Glutamate 155 serves as the catalytic Nucleophile.

This sequence belongs to the flavokinase family. Requires Zn(2+) as cofactor. It depends on Mg(2+) as a cofactor.

The protein resides in the microsome. It is found in the mitochondrion inner membrane. It localises to the endoplasmic reticulum. The enzyme catalyses riboflavin + ATP = FMN + ADP + H(+). It functions in the pathway cofactor biosynthesis; FMN biosynthesis; FMN from riboflavin (ATP route): step 1/1. Catalyzes the phosphorylation of riboflavin (vitamin B2) to form flavin mononucleotide (FMN) coenzyme. The polypeptide is Riboflavin kinase (FMN1) (Saccharomyces cerevisiae (strain ATCC 204508 / S288c) (Baker's yeast)).